A 366-amino-acid polypeptide reads, in one-letter code: Zinc transporter ZIP13 (366 aa).

Topologically, residues 1–5 (MTKQK) are lumenal. A helical membrane pass occupies residues 6–26 (LLLNGTFSLILIVACEAQQLP). Residues 27–57 (RSHAASSSGPLCEKEAESWGNLLSSERLDAW) are Cytoplasmic-facing. The helical transmembrane segment at 58-78 (ICSLIGSFMVGLSGIFPLLVI) threads the bilayer. Topologically, residues 79–97 (PFETGAALRSEAGSRRLKQ) are lumenal. The chain crosses the membrane as a helical span at residues 98-118 (LLSFAIGGLLGNVFLHLLPEA). Residues 119 to 137 (WAYTCSAAAGEGQSFQQQK) lie on the Cytoplasmic side of the membrane. The helical transmembrane segment at 138 to 158 (LLGLWVIIGFLTFLALEKIFL) threads the bilayer. The Lumenal segment spans residues 159 to 225 (EKEEEECPGV…NRIKISGYLN (67 aa)). The disordered stretch occupies residues 183–205 (SGYPPSKVAGKSQRAEKNSTQCN). A helical transmembrane segment spans residues 226-246 (LLANTIDNFTHGLAVAASFLV). Topologically, residues 247-282 (SRKVGFLTTMAILLHEIPHEVGDFAILLRAGFDRWS) are cytoplasmic. Residues 261-266 (HEIPHE) carry the XEXPHE-motif motif. The helical transmembrane segment at 283–303 (AAKMQLSTALGGIVGACFAIC) threads the bilayer. Over 304-313 (AQSPKGAGET) the chain is Lumenal. Residues 314–334 (VAWILPFTSGGFLYIALVNVV) traverse the membrane as a helical segment. The Cytoplasmic portion of the chain corresponds to 335–343 (PDLLEEKNP). Residues 344 to 364 (WNSLQQILLLCTGITVMVLLA) traverse the membrane as a helical segment. Over 365 to 366 (HN) the chain is Lumenal.

Belongs to the ZIP transporter (TC 2.A.5) family. Homodimer.

The protein localises to the golgi apparatus membrane. Its subcellular location is the cytoplasmic vesicle membrane. It localises to the endoplasmic reticulum membrane. The enzyme catalyses Zn(2+)(in) = Zn(2+)(out). In terms of biological role, functions as a zinc transporter transporting Zn(2+) from the Golgi apparatus to the cytosol and thus influences the zinc level at least in areas of the cytosol. The protein is Zinc transporter ZIP13 of Gallus gallus (Chicken).